A 227-amino-acid chain; its full sequence is Cytochrome c oxidase subunit 2 (227 aa).

At 1–14 (MAHSFQLGFQDATS) the chain is on the mitochondrial intermembrane side. The helical transmembrane segment at 15 to 45 (PIMEELLHFHDHTLMIVFLISSLVLYIITLM) threads the bilayer. The Mitochondrial matrix portion of the chain corresponds to 46-59 (LTTKLTHTSTMDAQ). The chain crosses the membrane as a helical span at residues 60–87 (EVETVWTILPAIILILIALPSLRILYLM). Topologically, residues 88–227 (DEINTPSLTV…HFENWSTSMI (140 aa)) are mitochondrial intermembrane. 6 residues coordinate Cu cation: His161, Cys196, Glu198, Cys200, His204, and Met207. Position 198 (Glu198) interacts with Mg(2+).

Belongs to the cytochrome c oxidase subunit 2 family. As to quaternary structure, component of the cytochrome c oxidase (complex IV, CIV), a multisubunit enzyme composed of 14 subunits. The complex is composed of a catalytic core of 3 subunits MT-CO1, MT-CO2 and MT-CO3, encoded in the mitochondrial DNA, and 11 supernumerary subunits COX4I, COX5A, COX5B, COX6A, COX6B, COX6C, COX7A, COX7B, COX7C, COX8 and NDUFA4, which are encoded in the nuclear genome. The complex exists as a monomer or a dimer and forms supercomplexes (SCs) in the inner mitochondrial membrane with NADH-ubiquinone oxidoreductase (complex I, CI) and ubiquinol-cytochrome c oxidoreductase (cytochrome b-c1 complex, complex III, CIII), resulting in different assemblies (supercomplex SCI(1)III(2)IV(1) and megacomplex MCI(2)III(2)IV(2)). Found in a complex with TMEM177, COA6, COX18, COX20, SCO1 and SCO2. Interacts with TMEM177 in a COX20-dependent manner. Interacts with COX20. Interacts with COX16. Requires Cu cation as cofactor.

Its subcellular location is the mitochondrion inner membrane. It catalyses the reaction 4 Fe(II)-[cytochrome c] + O2 + 8 H(+)(in) = 4 Fe(III)-[cytochrome c] + 2 H2O + 4 H(+)(out). Functionally, component of the cytochrome c oxidase, the last enzyme in the mitochondrial electron transport chain which drives oxidative phosphorylation. The respiratory chain contains 3 multisubunit complexes succinate dehydrogenase (complex II, CII), ubiquinol-cytochrome c oxidoreductase (cytochrome b-c1 complex, complex III, CIII) and cytochrome c oxidase (complex IV, CIV), that cooperate to transfer electrons derived from NADH and succinate to molecular oxygen, creating an electrochemical gradient over the inner membrane that drives transmembrane transport and the ATP synthase. Cytochrome c oxidase is the component of the respiratory chain that catalyzes the reduction of oxygen to water. Electrons originating from reduced cytochrome c in the intermembrane space (IMS) are transferred via the dinuclear copper A center (CU(A)) of subunit 2 and heme A of subunit 1 to the active site in subunit 1, a binuclear center (BNC) formed by heme A3 and copper B (CU(B)). The BNC reduces molecular oxygen to 2 water molecules using 4 electrons from cytochrome c in the IMS and 4 protons from the mitochondrial matrix. In Cephalopachus bancanus (Western tarsier), this protein is Cytochrome c oxidase subunit 2 (MT-CO2).